The chain runs to 512 residues: Acid-sensing ion channel 2 (512 aa).

At 1 to 37 the chain is on the cytoplasmic side; the sequence is MDLKESPSEGSLQPSSIQIFANTSTLHGIRHIFVYGP. Residues serine 8 and serine 11 each carry the phosphoserine modification. The helical transmembrane segment at 38 to 58 threads the bilayer; that stretch reads LTIRRVLWAVAFVGSLGLLLV. The Extracellular segment spans residues 59 to 427; sequence ESSERVSYYF…EQKKAYEVAA (369 aa). 6 disulfide bridges follow: cysteine 92–cysteine 193, cysteine 289–cysteine 364, cysteine 307–cysteine 360, cysteine 311–cysteine 358, cysteine 320–cysteine 342, and cysteine 322–cysteine 334. N-linked (GlcNAc...) asparagine glycans are attached at residues asparagine 365 and asparagine 392. Residues 428 to 448 form a helical membrane-spanning segment; the sequence is LLGDIGGQMGLFIGASLLTIL. The GAS motif; ion selectivity filter motif lies at 441 to 443; sequence GAS. The Cytoplasmic segment spans residues 449–512; that stretch reads ELFDYIYELI…ALGTLEEIAC (64 aa).

This sequence belongs to the amiloride-sensitive sodium channel (TC 1.A.6) family. ASIC2 subfamily. Can form homotrimers. Heterotrimer; forms functional heterotrimers producing channel with different properties. Forms heterotrimers with ASIC1; while ASIC1 determines current amplitude, ASIC2 influences the properties of the current. Forms heterotrimers with ASIC3; resulting in channels with distinct properties. Interacts with STOM; STOM regulates the gating of ASIC2-containing channels. Interacts with PICK1; promotes ASIC3 phosphorylation by PKC and activation of ASIC2/ASIC3 heterotrimers. In terms of tissue distribution, expressed in sciatic nerve and dorsal root ganglion (DRG) (at protein level). Both isoforms display the same expression pattern except in DRG where isoform 2 is more abundantly expressed. Widely distributed throughout the brain. Highly expressed in the main olfactory bulb, neo- and allo-cortical regions, hippocampal formation, habenula, basolateral amygdaloid nuclei, and cerebellum. In the olfactory system, expressed in the glomerular cell layer, the internal granular layer, and the mitral and internal plexiform cell layers. Within the glomerular layer, restricted to the periglomerular cells. In the neocortex, strongly expressed in the large pyramidal neurons in all cortical layers as well as in the oligo-, astro-, or micro-glia cells. In the hippocampal formation, expressed in dentate granule cells and hilar neurons, as well as in pyramidal cells of CA1-CA3 subfields. Expressed in stratum oriens and radiatum of all subfields. Within the thalamus, expressed moderately in the medial and lateral habenula. In the cerebellar cortex expressed in Purkinje cells and granule cells. Expressed at low levels in choroid plexus.

It is found in the cell membrane. The enzyme catalyses Na(+)(in) = Na(+)(out). It carries out the reaction K(+)(in) = K(+)(out). The catalysed reaction is Li(+)(in) = Li(+)(out). Its activity is regulated as follows. Inhibited by the diuretic drug amiloride. Inhibited by gadolinium ions, the heterotrimer with ASIC3 being more sensitive. Zn(2+) potentiates the acid activation of ASIC2-containing homomeric and heteromeric channels. The snake venom mambalgin-1 and mambalgin-2 inhibit the homotrimers composed of ASIC1 and ASIC2 and have strong analgesic effects. Forms pH-gated trimeric sodium channels that act as postsynaptic excitatory sensors in the nervous system. Upon extracellular acidification, these channels generate rapid, transient inward currents that fully desensitize. Highly selective for sodium, they are permeable to other cations. By forming heterotrimeric channels with ASIC1, could contribute to synaptic plasticity, learning, and memory. Additionally, as acid sensors at nerve terminals, plays a role in mechanosensation and phototransduction. Its function is as follows. Has no pH-gated sodium channel activity per se but can associate with other ASICs to produce functional channels with specific properties. The protein is Acid-sensing ion channel 2 of Rattus norvegicus (Rat).